Reading from the N-terminus, the 610-residue chain is MPKLKIFLFKYLYSKRFIGILVAIAIIFSYFTYYTISIGTKNGAVNSSKVIWFLLIDLIIFLVLGILLTRKFFQSFFFKNSDQNTSKLQNRIVVAFSLAAAIPTIIVSISSAYFLNLSIQAWFDRKISVVLDQSIMVADSYIAEHKVLLRETALAVAEDLSDMYYDLIHNPALFTKTLNTEAEMRSLDEAIVLNKSTNTIIANSYLSFSLSFATIPAHLIKKADSCEPVEVKSDPTKIRMLIKLKEYNDVYLLVGRSIDNKIIDHIDATNGAAAEYHRLKNQIGNIQIKFSIIFIFIALLLLLIAISFGVIVTAKIVNPIKKLVIATDKVKSGDLTVQVPENEVDKDEIGTLYAAFNRMIKQLSRQQRDLVIAQRALAWSDVAKKVAHEIKNPLTPILLASERLLKKFSPEIKERAEFENYLKMIIRHTNDIKNIVSEFVLFARLPAPKFTNCDLIYVINNIVEARKLLNNNILYSFETNIDQFDFTCDTTQINQVMINLLKNAEESLEGSNQAAIKVNINTSEQFINITVLDNGRGFPPELIGKATESYVTTRSKGMGVGLAIVKRIVEEHCGVLDIANRETGGAVIDIRFNLEELKLKVKRHEIGVIS.

Transmembrane regions (helical) follow at residues Ile-18 to Ile-38, Lys-49 to Thr-69, Ile-92 to Ala-112, and Ile-292 to Val-312. The 55-residue stretch at Ala-314–Arg-368 folds into the HAMP domain. One can recognise a Histidine kinase domain in the interval Lys-385 to Glu-596. Position 388 is a phosphohistidine; by autocatalysis (His-388).

It is found in the cell membrane. It carries out the reaction ATP + protein L-histidine = ADP + protein N-phospho-L-histidine.. Its function is as follows. Member of the two-component regulatory system RBE_0470/RBE_0312. In Rickettsia bellii (strain RML369-C), this protein is Putative sensor histidine kinase NtrY-like.